A 508-amino-acid chain; its full sequence is Mu-like prophage FluMu protein gp28 (508 aa).

It to phage Mu protein gp28.

The polypeptide is Mu-like prophage FluMu protein gp28 (Haemophilus influenzae (strain ATCC 51907 / DSM 11121 / KW20 / Rd)).